We begin with the raw amino-acid sequence, 481 residues long: Aspartyl/glutamyl-tRNA(Asn/Gln) amidotransferase subunit B (481 aa).

This sequence belongs to the GatB/GatE family. GatB subfamily. In terms of assembly, heterotrimer of A, B and C subunits.

The enzyme catalyses L-glutamyl-tRNA(Gln) + L-glutamine + ATP + H2O = L-glutaminyl-tRNA(Gln) + L-glutamate + ADP + phosphate + H(+). It carries out the reaction L-aspartyl-tRNA(Asn) + L-glutamine + ATP + H2O = L-asparaginyl-tRNA(Asn) + L-glutamate + ADP + phosphate + 2 H(+). In terms of biological role, allows the formation of correctly charged Asn-tRNA(Asn) or Gln-tRNA(Gln) through the transamidation of misacylated Asp-tRNA(Asn) or Glu-tRNA(Gln) in organisms which lack either or both of asparaginyl-tRNA or glutaminyl-tRNA synthetases. The reaction takes place in the presence of glutamine and ATP through an activated phospho-Asp-tRNA(Asn) or phospho-Glu-tRNA(Gln). The sequence is that of Aspartyl/glutamyl-tRNA(Asn/Gln) amidotransferase subunit B from Pseudomonas fluorescens (strain ATCC BAA-477 / NRRL B-23932 / Pf-5).